The primary structure comprises 177 residues: ATP synthase subunit delta (177 aa).

The protein belongs to the ATPase delta chain family. F-type ATPases have 2 components, F(1) - the catalytic core - and F(0) - the membrane proton channel. F(1) has five subunits: alpha(3), beta(3), gamma(1), delta(1), epsilon(1). F(0) has three main subunits: a(1), b(2) and c(10-14). The alpha and beta chains form an alternating ring which encloses part of the gamma chain. F(1) is attached to F(0) by a central stalk formed by the gamma and epsilon chains, while a peripheral stalk is formed by the delta and b chains.

Its subcellular location is the cell membrane. Functionally, f(1)F(0) ATP synthase produces ATP from ADP in the presence of a proton or sodium gradient. F-type ATPases consist of two structural domains, F(1) containing the extramembraneous catalytic core and F(0) containing the membrane proton channel, linked together by a central stalk and a peripheral stalk. During catalysis, ATP synthesis in the catalytic domain of F(1) is coupled via a rotary mechanism of the central stalk subunits to proton translocation. Its function is as follows. This protein is part of the stalk that links CF(0) to CF(1). It either transmits conformational changes from CF(0) to CF(1) or is implicated in proton conduction. The polypeptide is ATP synthase subunit delta (Buchnera aphidicola subsp. Acyrthosiphon pisum (strain APS) (Acyrthosiphon pisum symbiotic bacterium)).